A 273-amino-acid polypeptide reads, in one-letter code: Transposable element Tc1 transposase (273 aa).

Belongs to the transposase 5 family.

Its subcellular location is the nucleus. Its function is as follows. Probably essential for transposable element Tc1 transposition. The insertion of Tc1 is the main cause of spontaneous mutations. It is an endonuclease which can produce a single strand nick at the 5'-end of the transposon. The sequence is that of Transposable element Tc1 transposase (tc1a) from Caenorhabditis elegans.